Reading from the N-terminus, the 329-residue chain is Transaldolase (329 aa).

Lys136 serves as the catalytic Schiff-base intermediate with substrate.

Belongs to the transaldolase family. Type 1 subfamily. In terms of assembly, homodimer.

The protein resides in the cytoplasm. The enzyme catalyses D-sedoheptulose 7-phosphate + D-glyceraldehyde 3-phosphate = D-erythrose 4-phosphate + beta-D-fructose 6-phosphate. The protein operates within carbohydrate degradation; pentose phosphate pathway; D-glyceraldehyde 3-phosphate and beta-D-fructose 6-phosphate from D-ribose 5-phosphate and D-xylulose 5-phosphate (non-oxidative stage): step 2/3. Its function is as follows. Transaldolase is important for the balance of metabolites in the pentose-phosphate pathway. The chain is Transaldolase from Methylococcus capsulatus (strain ATCC 33009 / NCIMB 11132 / Bath).